Consider the following 500-residue polypeptide: NF-kappa-B inhibitor cactus (500 aa).

Residues 1–43 (MPSPTKAAEAATKATATSDCSCSAASVEQRAPSNAANPSSSLA) show a composition bias toward low complexity. Disordered stretches follow at residues 1–148 (MPSP…MRLK) and 171–212 (LNNL…APPS). Serine 45 bears the Phosphoserine; by PKC mark. Positions 69 to 86 (NETSDSGFISGPQSSQIF) are enriched in polar residues. The span at 118 to 130 (IIDEEEDQEEQEK) shows a compositional bias: acidic residues. Serine 144 carries the post-translational modification Phosphoserine; by PKC. The span at 171–189 (LNNLGQSSSTQITGRSKVQ) shows a compositional bias: polar residues. Threonine 183 is modified (phosphothreonine; by PKC). A compositionally biased stretch (low complexity) spans 190–212 (SSTASTANANPSGSGATSSAPPS). 5 ANK repeats span residues 229–261 (DGDTPLHLACISGSVDVVAALIRMAPHPCLLNI), 265–294 (VAQTPLHLAALTAQPNIMRILLLAGAEPTV), 298–327 (HGNTALHLSCIAGEKQCVRALTEKFGATEI), 361–390 (DGERCVHLAAEAGHIDILRILVSHGADINA), and 395–424 (SGRTPLHIAIEGCNEDLANFLLDECEKLNL). Phosphothreonine; by PKC occurs at positions 293 and 319. The residue at position 395 (serine 395) is a Phosphoserine; by PKC.

It belongs to the NF-kappa-B inhibitor family. In terms of assembly, phosphorylated isoform A binds to dorsal (dl); inhibits dl translocation to the nucleus and therefore from binding to DNA. In vitro, interacts with IKKbeta. Interacts with cactin and kappa-B-Ras. Activated IKKbeta phosphorylates cact. As to expression, expressed in ovary (at protein level).

The protein resides in the cytoplasm. Functionally, involved in the formation of the dorsoventral pattern. It inhibits nuclear translocation of the dorsal morphogen in the dorsal region of the embryo. Acts as a negative regulator of the NF-kappa-B (rel) signaling pathway. Cact is degraded by IKKbeta, this is essential for NF-kappa-B (rel) activation. In Drosophila melanogaster (Fruit fly), this protein is NF-kappa-B inhibitor cactus (cact).